We begin with the raw amino-acid sequence, 23 residues long: Alpha-conotoxin-like RgIB (23 aa).

2 disulfide bridges follow: C5-C11 and C6-C19. The segment at 7–9 is lacks the Ser-Xaa-Pro motif that is crucial for potent interaction with nAChR; sequence KNP.

As to expression, expressed by venom duct.

Its subcellular location is the secreted. Functionally, alpha-conotoxins act on postsynaptic membranes, they bind to the nicotinic acetylcholine receptors (nAChR) and thus inhibit them. Is a specific blocker of the alpha-3-beta-4/CHRNA3-CHRNB4 image nAChR and may also block alpha-3-beta-4-alpha-5 (CHRNA3-CHRNB4-CHRNA5) channels. Has possibly a distinct nAChR binding mode from other alpha-conotoxins, due to a different three residue motif (lacks the Ser-Xaa-Pro motif). In vivo, causes hyperactivity and behavioral disorders in mice following intracranial injection. The chain is Alpha-conotoxin-like RgIB from Conus regius (Crown cone).